Consider the following 392-residue polypeptide: GDP-mannose transporter (392 aa).

Over residues 1 to 11 (MDDKKNEDLEM) the composition is skewed to basic and acidic residues. Residues 1-25 (MDDKKNEDLEMRNFNGRSSPSQRDP) form a disordered region. Topologically, residues 1–45 (MDDKKNEDLEMRNFNGRSSPSQRDPFLAKPGAAAKRGNSAFDLSN) are cytoplasmic. Residues 46–66 (VTNSPGISILAYCLASISMTV) form a helical membrane-spanning segment. At 67–76 (TNKYCVSGSN) the chain is on the lumenal side. Residues 77-97 (WNLNFFYLAIQSVVCIIAIII) traverse the membrane as a helical segment. The Cytoplasmic portion of the chain corresponds to 98–116 (CKQAGLITNLAPFDTKKAK). A helical membrane pass occupies residues 117 to 139 (TWFPISLLLVGMIYTSTKALQFL). Over 140 to 142 (SVP) the chain is Lumenal. Residues 143-165 (VYTIFKNLTIIVIAYGEVLWFGG) form a helical membrane-spanning segment. Residues 166 to 171 (SVTPSA) lie on the Cytoplasmic side of the membrane. A helical transmembrane segment spans residues 172–191 (LFSFGLMVLSSVVAAWADIQ). At 192–210 (HALYGGGAAQSAEAAAALS) the chain is on the lumenal side. A helical membrane pass occupies residues 211–231 (TLNAGYAWMGMNVFCTAAYVL). The Cytoplasmic segment spans residues 232–246 (SMRKVIKKMNFKDWD). Residues 247–267 (TMFYNNLLTIPVLFVCSFIFE) form a helical membrane-spanning segment. Asparagine 268 and asparagine 273 each carry an N-linked (GlcNAc...) asparagine glycan. Residues 268–285 (NWSSENLTKNFPLETRNN) lie on the Lumenal side of the membrane. A helical membrane pass occupies residues 286 to 306 (LILGMIYSGLATIFISYCSAW). Over 307–314 (CIRVTSST) the chain is Cytoplasmic. Residues 315 to 337 (TYSMVGALNKLPIAVSGLVFFAA) form a helical membrane-spanning segment. At 338–340 (PVT) the chain is on the lumenal side. A helical transmembrane segment spans residues 341–360 (FGSVSAIFIGFVSGIVYAWA). Topologically, residues 361-392 (KVRQNQSKGNILPTTQPVMSASSQSNRDAAKA) are cytoplasmic. The interval 373–392 (PTTQPVMSASSQSNRDAAKA) is disordered.

Belongs to the TPT transporter family. SLC35D subfamily. Homooligomer.

The protein localises to the golgi apparatus membrane. The protein resides in the cytoplasmic vesicle membrane. Its subcellular location is the endoplasmic reticulum membrane. Functionally, involved in the import of GDP-mannose from the cytoplasm into the Golgi lumen. The sequence is that of GDP-mannose transporter (gmt1) from Botryotinia fuckeliana (strain B05.10) (Noble rot fungus).